The chain runs to 395 residues: L-methionine gamma-lyase (395 aa).

Pyridoxal 5'-phosphate-binding positions include 56–58 (YTR) and 86–87 (GM). Tyr111 provides a ligand contact to substrate. 206 to 208 (SAT) lines the pyridoxal 5'-phosphate pocket. N6-(pyridoxal phosphate)lysine is present on Lys209. A substrate-binding site is contributed by Arg373.

Belongs to the trans-sulfuration enzymes family. L-methionine gamma-lyase subfamily. As to quaternary structure, homotetramer. It depends on pyridoxal 5'-phosphate as a cofactor.

It catalyses the reaction L-methionine + H2O = methanethiol + 2-oxobutanoate + NH4(+). The catalysed reaction is L-homocysteine + H2O = 2-oxobutanoate + hydrogen sulfide + NH4(+) + H(+). It carries out the reaction L-cysteine + H2O = hydrogen sulfide + pyruvate + NH4(+) + H(+). Functionally, catalyzes the alpha,gamma-elimination of L-methionine to produce methanethiol, 2-oxobutanoate and ammonia, and that of L-homocysteine. Can also use L-cysteine as substrate, catalyzing its alpha,beta-elimination; this activity seems to only minimally contribute to the production of hydrogen sulfide (H2S) by F.nucleatum in the oral cavity, which is toxic for a large variety of cells in periodontal regions. The protein is L-methionine gamma-lyase of Fusobacterium nucleatum subsp. nucleatum (strain ATCC 25586 / DSM 15643 / BCRC 10681 / CIP 101130 / JCM 8532 / KCTC 2640 / LMG 13131 / VPI 4355).